Consider the following 269-residue polypeptide: MGSIENPEIMASTMLHILPLAGKVYGITGGASGIGLATAQILSRRGATVCIADVDPKAMASAEVYFSGQSGAKYSITKVDISKRSEVNAWVDGIISQFGRLDGAANVAGVIGKIHGAVPVSEMDDDEWDKIVAVNLTGTMYCMRAQLRNIVDGGSIVNVASIHGLKGFANHAAYDASKHGVIGLTKAAAQENGAREIRVNAVAPGAIYTPLMQKNWDITGRPKDAPFDDPSAFRRQGTAMETGNVIAFLLGPDSTFVSGSVYSVDGAWI.

NADP(+) contacts are provided by I34, D80, R144, Y174, K178, I207, and T209. Y174 acts as the Proton donor in catalysis. Catalysis depends on K178, which acts as the Lowers pKa of active site Tyr.

This sequence belongs to the short-chain dehydrogenases/reductases (SDR) family.

It participates in hormone biosynthesis. In terms of biological role, short-chain dehydrogenase/reductase involved in the biosynthesis of abscisic acid (ABA), a phytohormone that acts antagonistically toward salicylic acid (SA), jasmonic acid (JA) and ethylene (ETH) signaling, to impede plant defense responses. During pathogen-host interaction, ABA plays a dual role in disease severity by increasing plant susceptibility and accelerating pathogenesis in the fungus itself. The first step of the pathway catalyzes the reaction from farnesyl diphosphate to alpha-ionylideneethane performed by the alpha-ionylideneethane synthase ABA3 via a three-step reaction mechanism involving 2 neutral intermediates, beta-farnesene and allofarnesene. The cytochrome P450 monooxygenase ABA1 might then be involved in the conversion of alpha-ionylideneethane to alpha-ionylideneacetic acid. Alpha-ionylideneacetic acid is further converted to abscisic acid in 2 steps involving the cytochrome P450 monooxygenase ABA2 and the short-chain dehydrogenase/reductase ABA4, via the intermediates 1'-deoxy-ABA or 1',4'-trans-diol-ABA, depending on the order of action of these 2 enzymes. ABA2 is responsible for the hydroxylation of carbon atom C-1' and ABA4 might be involved in the oxidation of the C-4' carbon atom. This is Short-chain dehydrogenase/reductase ABA4 (ABA4) from Pyricularia oryzae (strain Y34) (Rice blast fungus).